A 1426-amino-acid chain; its full sequence is Phospholipid-transporting ATPase VD (1426 aa).

Topologically, residues 1-97 (MTEALQWARY…PRNLFEQFHR (97 aa)) are cytoplasmic. A helical transmembrane segment spans residues 98–118 (AANLYFLFLVVLNWVPLVEAF). The Exoplasmic loop portion of the chain corresponds to 119–121 (QKE). Residues 122 to 142 (ITMLPLVVVLTIIAIKDGLED) form a helical membrane-spanning segment. The Cytoplasmic segment spans residues 143–321 (YRKYKIDKQI…SKLERRANTD (179 aa)). The chain crosses the membrane as a helical span at residues 322 to 342 (VLWCVMLLVIMCLTGAVGHGI). The Exoplasmic loop segment spans residues 343 to 365 (WLSRYEKMHFFNVPEPDGHIISP). A helical transmembrane segment spans residues 366-386 (LLAGFYMFWTMIILLQVLIPI). Over 387-1113 (SLYVSIEIVK…HWCYTRLSNM (727 aa)) the chain is Cytoplasmic. D438 (4-aspartylphosphate intermediate) is an active-site residue. ATP contacts are provided by D438, K439, and T440. D438 is a binding site for Mg(2+). T440 provides a ligand contact to Mg(2+). The tract at residues 506-531 (NGPLGNKPSNHLAGSSFTLGSGEGAS) is disordered. Positions 512–524 (KPSNHLAGSSFTL) are enriched in polar residues. Residues E730, F772, K796, R840, T920, G921, D922, 996 to 1003 (GLIITGKT), R1030, and K1036 contribute to the ATP site. A Mg(2+)-binding site is contributed by D1056. Residues N1059 and D1060 each coordinate ATP. Residue D1060 coordinates Mg(2+). A helical transmembrane segment spans residues 1114-1134 (ILYFFYKNVAYVNLLFWYQFF). Over 1135–1145 (CGFSGTSMTDY) the chain is Exoplasmic loop. The chain crosses the membrane as a helical span at residues 1146–1166 (WVLIFFNLLFTSAPPVIYGVL). The Cytoplasmic segment spans residues 1167-1195 (EKDVSAETLMQLPELYRSGQKSEAYLPHT). Residues 1196 to 1216 (FWITLLDAFYQSLVCFFVPYF) form a helical membrane-spanning segment. Over 1217–1224 (TYQGSDTD) the chain is Exoplasmic loop. A helical transmembrane segment spans residues 1225–1245 (IFAFGNPLNTAALFIVLLHLV). Residues 1246–1252 (IESKSLT) lie on the Cytoplasmic side of the membrane. Residues 1253-1273 (WIHLLVIIGSILSYFLFAIVF) traverse the membrane as a helical segment. Residues 1274 to 1292 (GAMCVTCNPPSNPYWIMQE) are Exoplasmic loop-facing. Residues 1293-1313 (HMLDPVFYLVCILTTSIALLP) form a helical membrane-spanning segment. Over 1314–1426 (RFVYRVLQGS…MAGPSKGKES (113 aa)) the chain is Cytoplasmic. Residue 1364–1371 (ANQSAGKS) participates in ATP binding.

This sequence belongs to the cation transport ATPase (P-type) (TC 3.A.3) family. Type IV subfamily. In terms of assembly, component of a P4-ATPase flippase complex which consists of a catalytic alpha subunit ATP10A and an accessory beta subunit TMEM30A. Mg(2+) is required as a cofactor. In terms of processing, autophosphorylated at the conserved aspartate of the P-type ATPase signature sequence. Expressed in placenta and, to a lesser extent, in kidney.

The protein localises to the cell membrane. It is found in the endoplasmic reticulum membrane. It carries out the reaction ATP + H2O + phospholipidSide 1 = ADP + phosphate + phospholipidSide 2.. It catalyses the reaction a beta-D-glucosyl-(1&lt;-&gt;1')-N-acylsphing-4-enine(out) + ATP + H2O = a beta-D-glucosyl-(1&lt;-&gt;1')-N-acylsphing-4-enine(in) + ADP + phosphate + H(+). Catalytic component of a P4-ATPase flippase complex, which catalyzes the hydrolysis of ATP coupled to the transport of glucosylceramide (GlcCer) from the outer to the inner leaflet of the plasma membrane. The polypeptide is Phospholipid-transporting ATPase VD (Homo sapiens (Human)).